A 121-amino-acid polypeptide reads, in one-letter code: Small ribosomal subunit protein uS13 (121 aa).

The segment at 91 to 121 (HRRGLPVRGQKTKNNARTRKGPVKTVANKKK) is disordered.

Belongs to the universal ribosomal protein uS13 family. In terms of assembly, part of the 30S ribosomal subunit. Forms a loose heterodimer with protein S19. Forms two bridges to the 50S subunit in the 70S ribosome.

In terms of biological role, located at the top of the head of the 30S subunit, it contacts several helices of the 16S rRNA. In the 70S ribosome it contacts the 23S rRNA (bridge B1a) and protein L5 of the 50S subunit (bridge B1b), connecting the 2 subunits; these bridges are implicated in subunit movement. Contacts the tRNAs in the A and P-sites. The chain is Small ribosomal subunit protein uS13 from Staphylococcus saprophyticus subsp. saprophyticus (strain ATCC 15305 / DSM 20229 / NCIMB 8711 / NCTC 7292 / S-41).